The chain runs to 79 residues: Conotoxin ArMSGL-0121 (79 aa).

Residues 1 to 20 form the signal peptide; that stretch reads MSRLGIMVLTLLLLVFIVTS. The propeptide occupies 21 to 44; the sequence is HQDAGEKQATQRNAINFRWRRSFT. 3 cysteine pairs are disulfide-bonded: C52–C64, C56–C73, and C63–C77. A Leucine amide modification is found at L78.

It belongs to the conotoxin O3 superfamily. Expressed by the venom duct.

It localises to the secreted. This is Conotoxin ArMSGL-0121 from Conus arenatus (Sand-dusted cone).